The primary structure comprises 197 residues: Probable GTP-binding protein EngB (197 aa).

Residues 22–195 form the EngB-type G domain; the sequence is ALPELALVGR…WQWIEERTGV (174 aa). GTP-binding positions include 30 to 37, 57 to 61, 75 to 78, 142 to 145, and 174 to 176; these read GRSNVGKS, GKTQT, DVPG, TKVD, and FSA. Residues S37 and T59 each coordinate Mg(2+).

It belongs to the TRAFAC class TrmE-Era-EngA-EngB-Septin-like GTPase superfamily. EngB GTPase family. The cofactor is Mg(2+).

Functionally, necessary for normal cell division and for the maintenance of normal septation. This chain is Probable GTP-binding protein EngB, found in Limosilactobacillus fermentum (strain NBRC 3956 / LMG 18251) (Lactobacillus fermentum).